Consider the following 298-residue polypeptide: Lipoyl synthase (298 aa).

The [4Fe-4S] cluster site is built by Cys40, Cys45, Cys51, Cys67, Cys71, Cys74, and Ser280. The region spanning 53-269 is the Radical SAM core domain; it reads AVRKTATFMI…KEIALSKGFS (217 aa).

This sequence belongs to the radical SAM superfamily. Lipoyl synthase family. Requires [4Fe-4S] cluster as cofactor.

Its subcellular location is the cytoplasm. The catalysed reaction is [[Fe-S] cluster scaffold protein carrying a second [4Fe-4S](2+) cluster] + N(6)-octanoyl-L-lysyl-[protein] + 2 oxidized [2Fe-2S]-[ferredoxin] + 2 S-adenosyl-L-methionine + 4 H(+) = [[Fe-S] cluster scaffold protein] + N(6)-[(R)-dihydrolipoyl]-L-lysyl-[protein] + 4 Fe(3+) + 2 hydrogen sulfide + 2 5'-deoxyadenosine + 2 L-methionine + 2 reduced [2Fe-2S]-[ferredoxin]. It participates in protein modification; protein lipoylation via endogenous pathway; protein N(6)-(lipoyl)lysine from octanoyl-[acyl-carrier-protein]. Catalyzes the radical-mediated insertion of two sulfur atoms into the C-6 and C-8 positions of the octanoyl moiety bound to the lipoyl domains of lipoate-dependent enzymes, thereby converting the octanoylated domains into lipoylated derivatives. The polypeptide is Lipoyl synthase (Bacillus cereus (strain B4264)).